The chain runs to 239 residues: Purine nucleoside phosphorylase DeoD-type (239 aa).

Histidine 5 lines the a purine D-ribonucleoside pocket. Phosphate contacts are provided by residues glycine 21, arginine 25, arginine 44, and 88 to 91 (RVGS). A purine D-ribonucleoside-binding positions include 180 to 182 (EME) and 204 to 205 (SD). Aspartate 205 acts as the Proton donor in catalysis.

Belongs to the PNP/UDP phosphorylase family. As to quaternary structure, homohexamer; trimer of homodimers.

It catalyses the reaction a purine D-ribonucleoside + phosphate = a purine nucleobase + alpha-D-ribose 1-phosphate. The enzyme catalyses a purine 2'-deoxy-D-ribonucleoside + phosphate = a purine nucleobase + 2-deoxy-alpha-D-ribose 1-phosphate. Functionally, catalyzes the reversible phosphorolytic breakdown of the N-glycosidic bond in the beta-(deoxy)ribonucleoside molecules, with the formation of the corresponding free purine bases and pentose-1-phosphate. The protein is Purine nucleoside phosphorylase DeoD-type of Yersinia pseudotuberculosis serotype O:1b (strain IP 31758).